The chain runs to 39 residues: Photosystem II reaction center protein J (39 aa).

A helical transmembrane segment spans residues 9–29 (LWLVGLVGGFAVITIVSLFIY).

This sequence belongs to the PsbJ family. In terms of assembly, PSII is composed of 1 copy each of membrane proteins PsbA, PsbB, PsbC, PsbD, PsbE, PsbF, PsbH, PsbI, PsbJ, PsbK, PsbL, PsbM, PsbT, PsbX, PsbY, PsbZ, Psb30/Ycf12, at least 3 peripheral proteins of the oxygen-evolving complex and a large number of cofactors. It forms dimeric complexes.

It is found in the plastid. The protein resides in the chloroplast thylakoid membrane. Its function is as follows. One of the components of the core complex of photosystem II (PSII). PSII is a light-driven water:plastoquinone oxidoreductase that uses light energy to abstract electrons from H(2)O, generating O(2) and a proton gradient subsequently used for ATP formation. It consists of a core antenna complex that captures photons, and an electron transfer chain that converts photonic excitation into a charge separation. In Thalassiosira pseudonana (Marine diatom), this protein is Photosystem II reaction center protein J.